The chain runs to 340 residues: Ubiquitin-like domain-containing CTD phosphatase (340 aa).

Residues leucine 24–aspartate 101 form the Ubiquitin-like domain. One can recognise an FCP1 homology domain in the interval cysteine 151 to isoleucine 312. The interval cysteine 151–isoleucine 312 is phosphatase. Positions 161, 163, and 271 each coordinate Mg(2+).

It depends on Mg(2+) as a cofactor.

The protein resides in the nucleus. It catalyses the reaction O-phospho-L-seryl-[protein] + H2O = L-seryl-[protein] + phosphate. The catalysed reaction is O-phospho-L-threonyl-[protein] + H2O = L-threonyl-[protein] + phosphate. Functionally, dephosphorylates 26S nuclear proteasomes, thereby decreasing their proteolytic activity. The dephosphorylation may prevent assembly of the core and regulatory particles (CP and RP) into mature 26S proteasome. In Arabidopsis thaliana (Mouse-ear cress), this protein is Ubiquitin-like domain-containing CTD phosphatase.